Here is a 147-residue protein sequence, read N- to C-terminus: Hemoglobin subunit gamma (147 aa).

The Globin domain occupies 3 to 147 (DFTAEEKAAI…VASAVARKYH (145 aa)). 2 residues coordinate heme b: H64 and H93.

This sequence belongs to the globin family. In terms of assembly, heterotetramer of two alpha chains and two gamma chains in fetal hemoglobin (Hb F). In terms of tissue distribution, red blood cells.

Gamma chains make up the fetal hemoglobin F, in combination with alpha chains. The sequence is that of Hemoglobin subunit gamma (HBG) from Trichechus manatus (Caribbean manatee).